A 332-amino-acid polypeptide reads, in one-letter code: Large ribosomal subunit protein mL44 (332 aa).

The N-terminal 30 residues, 1–30, are a transit peptide targeting the mitochondrion; the sequence is MASGLVRLLQQGHRCLLAPVAPKLVPPVRG. The 143-residue stretch at 86 to 228 folds into the RNase III domain; the sequence is DLLKTAFVNS…LITQMTGKEL (143 aa). Positions 236–306 constitute a DRBM domain; that stretch reads NPMGLLVEEL…ARVALRKLYG (71 aa).

Belongs to the ribonuclease III family. Mitochondrion-specific ribosomal protein mL44 subfamily. Component of the mitochondrial large ribosomal subunit (mt-LSU). Mature mammalian 55S mitochondrial ribosomes consist of a small (28S) and a large (39S) subunit. The 28S small subunit contains a 12S ribosomal RNA (12S mt-rRNA) and 30 different proteins. The 39S large subunit contains a 16S rRNA (16S mt-rRNA), a copy of mitochondrial valine transfer RNA (mt-tRNA(Val)), which plays an integral structural role, and 52 different proteins.

The protein resides in the mitochondrion. Functionally, component of the 39S subunit of mitochondrial ribosome. May have a function in the assembly/stability of nascent mitochondrial polypeptides exiting the ribosome. This is Large ribosomal subunit protein mL44 (MRPL44) from Homo sapiens (Human).